The primary structure comprises 553 residues: Putative transport protein YidE (553 aa).

5 consecutive transmembrane segments (helical) span residues isoleucine 4 to isoleucine 24, glycine 28 to aspartate 48, phenylalanine 65 to serine 85, leucine 95 to phenylalanine 115, and methionine 158 to methionine 178. RCK C-terminal domains follow at residues lysine 192–lysine 276 and aspartate 279–asparagine 361. Transmembrane regions (helical) follow at residues methionine 371–valine 391, glycine 393–leucine 413, leucine 437–threonine 457, leucine 464–leucine 484, tyrosine 493–alanine 513, and leucine 533–glycine 553.

The protein belongs to the AAE transporter (TC 2.A.81) family. YidE subfamily.

The protein localises to the cell membrane. This is Putative transport protein YidE from Salmonella heidelberg (strain SL476).